A 272-amino-acid chain; its full sequence is Putative pyruvate, phosphate dikinase regulatory protein (272 aa).

154–161 contributes to the ADP binding site; sequence GVSRTSKS.

The protein belongs to the pyruvate, phosphate/water dikinase regulatory protein family. PDRP subfamily.

It catalyses the reaction N(tele)-phospho-L-histidyl/L-threonyl-[pyruvate, phosphate dikinase] + ADP = N(tele)-phospho-L-histidyl/O-phospho-L-threonyl-[pyruvate, phosphate dikinase] + AMP + H(+). The enzyme catalyses N(tele)-phospho-L-histidyl/O-phospho-L-threonyl-[pyruvate, phosphate dikinase] + phosphate + H(+) = N(tele)-phospho-L-histidyl/L-threonyl-[pyruvate, phosphate dikinase] + diphosphate. In terms of biological role, bifunctional serine/threonine kinase and phosphorylase involved in the regulation of the pyruvate, phosphate dikinase (PPDK) by catalyzing its phosphorylation/dephosphorylation. In Wolbachia sp. subsp. Brugia malayi (strain TRS), this protein is Putative pyruvate, phosphate dikinase regulatory protein.